The sequence spans 541 residues: MKRNRWWIILLLFLVFLPKTSFAHAYIVKSSPGENSELKSAPAQVEIEFNEPVEEGFHYIKVYNSNGDRVDTDKTEIKKDNHHIMTVKLKKNLPKDVYRAEWNAVSADGHPVSGVIPFSIGKADGGFSSQKAADSALNPGTAADRAILYTALSLFIGTVFFHLFWYKGKSEQLVKRTRRILTGSIAALGLALLLQLPIQTKANAGGGWGSAFQPGYIRETLFETAGGSIWIIQAALFVLLALSVIPAIRKNRFSSFGYWTAPLIFFFGLLLAKAFTGHAAVVEEKTVGILMDFLHLTSASIWVGGIAALVLLLSKEWRQPDKTLAWETVRRFSPWALTAVGVILFSGLLNGFFIIRSMDSLFHTAYGQALLVKSGLFVFMLVLGAIHFLLTRKQRRTGISRTLKAEWAIGIAVLITAAVFTSLPSPPEPAPEPFYQTKAIENGQSVSLSISPNQPGKNVFELRVTDHNGDPVKNIQQITLTVYKTGLSGSENKSTFTLKEKTKGVFQDQNLSINEKGNWKIKVHGLTGDFNEINIMFTKTN.

A signal peptide spans 1 to 25 (MKRNRWWIILLLFLVFLPKTSFAHA). Cu cation contacts are provided by His24 and His110. A run of 8 helical transmembrane segments spans residues 146 to 166 (AILY…LFWY), 180 to 200 (ILTG…PIQT), 228 to 248 (SIWI…IPAI), 262 to 282 (PLIF…AAVV), 293 to 313 (FLHL…VLLL), 335 to 355 (WALT…FFII), 370 to 390 (LLVK…HFLL), and 407 to 427 (WAIG…PSPP).

This sequence in the N-terminal section; belongs to the CopC family. It in the C-terminal section; belongs to the CopD family.

The protein resides in the cell membrane. Its function is as follows. Involved in uptake of extracellular oxidized copper under copper-limiting conditions. This chain is Copper transport protein CutJ, found in Bacillus subtilis (strain 168).